Reading from the N-terminus, the 205-residue chain is Spermatogenesis-associated protein 24 (205 aa).

Residues 17–166 (LAFDQLRDVI…QQRQSFRNHM (150 aa)) are a coiled coil. The interval 138-185 (EDILNGKENEIKELQQVISQQRQSFRNHMSDFRIQKQQETYMAQVLDQ) is required for interaction with CBX5 and TBPL1. The tract at residues 182–205 (VLDQKHKKTSGTRRARSRQCSREK) is disordered. Basic residues predominate over residues 186 to 205 (KHKKTSGTRRARSRQCSREK).

This sequence belongs to the SPATA24 family. As to quaternary structure, homodimer. Interacts with CBX3, CBX5, GMNN, GTF2B, TBPL1 and the polycomb proteins PHCF2, RNF2 and SCMH1 but not with CBX1 or PCGF2. As to expression, highly expressed in the testis and is mainly localized in the spermatids. Also expressed in the lung, heart, spleen and epididymis.

Its subcellular location is the cytoplasm. The protein resides in the nucleus. It is found in the nucleolus. It localises to the nucleoplasm. In terms of biological role, binds DNA with high affinity but does not bind to TATA boxes. Synergises with GMNN and TBP in activation of TATA box-containing promoters and with GMNN and TBPL1 in activation of the NF1 TATA-less promoter. May play a role in cytoplasm movement and removal during spermiogenesis. This Rattus norvegicus (Rat) protein is Spermatogenesis-associated protein 24 (Spata24).